The following is a 90-amino-acid chain: Cell division topological specificity factor (90 aa).

The disordered stretch occupies residues 1-21; the sequence is MAGFWSKIFGNDEKPSSAQTA. The segment covering 10-21 has biased composition (basic and acidic residues); it reads GNDEKPSSAQTA.

This sequence belongs to the MinE family.

Its function is as follows. Prevents the cell division inhibition by proteins MinC and MinD at internal division sites while permitting inhibition at polar sites. This ensures cell division at the proper site by restricting the formation of a division septum at the midpoint of the long axis of the cell. The sequence is that of Cell division topological specificity factor from Acinetobacter baylyi (strain ATCC 33305 / BD413 / ADP1).